The following is a 127-amino-acid chain: Large ribosomal subunit protein bL20 (127 aa).

The protein belongs to the bacterial ribosomal protein bL20 family.

In terms of biological role, binds directly to 23S ribosomal RNA and is necessary for the in vitro assembly process of the 50S ribosomal subunit. It is not involved in the protein synthesizing functions of that subunit. The chain is Large ribosomal subunit protein bL20 from Bifidobacterium adolescentis (strain ATCC 15703 / DSM 20083 / NCTC 11814 / E194a).